Reading from the N-terminus, the 511-residue chain is Sporulation-specific chitinase 2 (511 aa).

Positions 1-34 (MVGHSAQHRSKSSLVSHLLILLIFITIIIEMCLY) are cleaved as a signal peptide. Positions 73–472 (FISGVYYSNW…NAFNEGLHFN (400 aa)) constitute a GH18 domain. N147 is a glycosylation site (N-linked (GlcNAc...) asparagine). The Proton donor role is filled by E223. N-linked (GlcNAc...) asparagine glycans are attached at residues N228, N456, and N472.

This sequence belongs to the glycosyl hydrolase 18 family. Chitinase class III subfamily.

It localises to the secreted. The catalysed reaction is Random endo-hydrolysis of N-acetyl-beta-D-glucosaminide (1-&gt;4)-beta-linkages in chitin and chitodextrins.. This is Sporulation-specific chitinase 2 (CTS2) from Saccharomyces cerevisiae (strain ATCC 204508 / S288c) (Baker's yeast).